A 332-amino-acid chain; its full sequence is Cytoskeleton protein RodZ (332 aa).

At 1 to 111 (MNTETTQDTT…LKKSRKKRDG (111 aa)) the chain is on the cytoplasmic side. The region spanning 19–71 (LREARERLGLTQQTIAERLCLKITTVRDIEDGTTPADLAPTFLRGYIRSYAKL) is the HTH cro/C1-type domain. The segment at residues 30–49 (QQTIAERLCLKITTVRDIED) is a DNA-binding region (H-T-H motif). The helical; Signal-anchor for type II membrane protein transmembrane segment at 112-132 (WLMIITWLVVLVVLGLTGAWW) threads the bilayer. Topologically, residues 133–332 (WQNHQAQQAE…QVARLTLTAE (200 aa)) are periplasmic. Residues 149-225 (HASSMQSQTE…PSQANATQSQ (77 aa)) form a disordered region. 2 stretches are compositionally biased toward polar residues: residues 151–160 (SSMQSQTEGQ) and 168–182 (SAPQETSTAGSAATP). Over residues 190 to 225 (SATIAATPSTPPSSTTASSAAPSSQSPSQANATQSQ) the composition is skewed to low complexity.

This sequence belongs to the RodZ family.

It is found in the cell inner membrane. Its function is as follows. Cytoskeletal protein that is involved in cell-shape control through regulation of the length of the long axis. The sequence is that of Cytoskeleton protein RodZ from Pectobacterium atrosepticum (strain SCRI 1043 / ATCC BAA-672) (Erwinia carotovora subsp. atroseptica).